The sequence spans 235 residues: Ubiquinone biosynthesis O-methyltransferase (235 aa).

Residues Arg39, Gly59, Asp80, and Met124 each coordinate S-adenosyl-L-methionine.

The protein belongs to the methyltransferase superfamily. UbiG/COQ3 family.

The catalysed reaction is a 3-demethylubiquinol + S-adenosyl-L-methionine = a ubiquinol + S-adenosyl-L-homocysteine + H(+). It catalyses the reaction a 3-(all-trans-polyprenyl)benzene-1,2-diol + S-adenosyl-L-methionine = a 2-methoxy-6-(all-trans-polyprenyl)phenol + S-adenosyl-L-homocysteine + H(+). It participates in cofactor biosynthesis; ubiquinone biosynthesis. O-methyltransferase that catalyzes the 2 O-methylation steps in the ubiquinone biosynthetic pathway. This Vibrio vulnificus (strain CMCP6) protein is Ubiquinone biosynthesis O-methyltransferase.